The following is a 143-amino-acid chain: Putative cytokinin riboside 5'-monophosphate phosphoribohydrolase LOG9 (143 aa).

Substrate-binding positions include 23 to 24 (RK), 41 to 47 (RYETMEE), and Thr53.

It belongs to the LOG family.

The catalysed reaction is N(6)-(dimethylallyl)adenosine 5'-phosphate + H2O = N(6)-dimethylallyladenine + D-ribose 5-phosphate. The enzyme catalyses 9-ribosyl-trans-zeatin 5'-phosphate + H2O = trans-zeatin + D-ribose 5-phosphate. Its function is as follows. Cytokinin-activating enzyme working in the direct activation pathway. Phosphoribohydrolase that converts inactive cytokinin nucleotides to the biologically active free-base forms. The chain is Putative cytokinin riboside 5'-monophosphate phosphoribohydrolase LOG9 (LOG9) from Arabidopsis thaliana (Mouse-ear cress).